Here is an 84-residue protein sequence, read N- to C-terminus: Putative defensin-like protein 165 (84 aa).

Positions M1–A27 are cleaved as a signal peptide. 4 cysteine pairs are disulfide-bonded: C31/C78, C41/C60, C46/C72, and C50/C74.

Belongs to the DEFL family.

It is found in the secreted. This chain is Putative defensin-like protein 165 (LCR12), found in Arabidopsis thaliana (Mouse-ear cress).